Reading from the N-terminus, the 655-residue chain is p-hydroxybenzoic acid efflux pump subunit AaeB (655 aa).

11 helical membrane passes run 13 to 33 (FAVK…HFQL), 38 to 58 (WAVL…GGEP), 69 to 89 (LRII…ISMI), 93 to 113 (LLMI…SSLV), 121 to 141 (WGLS…EPLL), 152 to 172 (EIVI…PRSI), 370 to 390 (LFWL…IAVV), 407 to 427 (FIYG…VIIP), 431 to 451 (QSML…GIEV), 459 to 479 (MGAL…TFHF), and 482 to 502 (FLDS…VILL).

It belongs to the aromatic acid exporter ArAE (TC 2.A.85) family.

Its subcellular location is the cell inner membrane. Functionally, forms an efflux pump with AaeA. Could function as a metabolic relief valve, allowing to eliminate certain compounds when they accumulate to high levels in the cell. The protein is p-hydroxybenzoic acid efflux pump subunit AaeB of Salmonella heidelberg (strain SL476).